Consider the following 833-residue polypeptide: F1 capsule-anchoring protein (833 aa).

Residues 1-25 form the signal peptide; that stretch reads MRYSKLFLCAGLTLATLPCWGRAYT. Cys807 and Cys829 are oxidised to a cystine.

It belongs to the fimbrial export usher family.

The protein localises to the cell outer membrane. Functionally, a probable role in capsular biogenesis. It is likely that the caf1A molecule binds F1 antigen subunits during the extracellular secretion process. The sequence is that of F1 capsule-anchoring protein (caf1A) from Yersinia pestis.